We begin with the raw amino-acid sequence, 433 residues long: ATP-dependent protease ATPase subunit HslU (433 aa).

ATP contacts are provided by residues Val18, 60 to 65 (GVGKTE), Asp246, Glu311, and Arg383.

Belongs to the ClpX chaperone family. HslU subfamily. A double ring-shaped homohexamer of HslV is capped on each side by a ring-shaped HslU homohexamer. The assembly of the HslU/HslV complex is dependent on binding of ATP.

It is found in the cytoplasm. Functionally, ATPase subunit of a proteasome-like degradation complex; this subunit has chaperone activity. The binding of ATP and its subsequent hydrolysis by HslU are essential for unfolding of protein substrates subsequently hydrolyzed by HslV. HslU recognizes the N-terminal part of its protein substrates and unfolds these before they are guided to HslV for hydrolysis. The sequence is that of ATP-dependent protease ATPase subunit HslU from Nitrobacter winogradskyi (strain ATCC 25391 / DSM 10237 / CIP 104748 / NCIMB 11846 / Nb-255).